A 556-amino-acid polypeptide reads, in one-letter code: TNF receptor-associated factor 6-A (556 aa).

The segment at 72 to 111 adopts an RING-type; degenerate zinc-finger fold; that stretch reads CPICLMALREAVQTPCGHRFCKACILKSLRNAGHKCPVDN. 2 consecutive TRAF-type zinc fingers follow at residues 148 to 204 and 205 to 261; these read RHLE…EDKS and GHEL…HNLA. One can recognise an MATH domain in the interval 384-533; sequence NGVFIWRIKG…NDTLLVRCSV (150 aa).

This sequence belongs to the TNF receptor-associated factor family. A subfamily. In terms of assembly, homotrimer. Homooligomer. Interacts with tifa. Highly expressed in ovary and moderately expressed in kidney, spleen, stomach, colon and testis.

The protein resides in the cytoplasm. It is found in the cell cortex. The protein localises to the nucleus. Its subcellular location is the lipid droplet. The enzyme catalyses S-ubiquitinyl-[E2 ubiquitin-conjugating enzyme]-L-cysteine + [acceptor protein]-L-lysine = [E2 ubiquitin-conjugating enzyme]-L-cysteine + N(6)-ubiquitinyl-[acceptor protein]-L-lysine.. Its pathway is protein modification; protein ubiquitination. Functionally, E3 ubiquitin ligase that, together with UBE2N and UBE2V1, mediates the synthesis of 'Lys-63'-linked-polyubiquitin chains conjugated to proteins, such as IKBKG, IRAK1, AKT1 and AKT2. Also mediates ubiquitination of free/unanchored polyubiquitin chain that leads to MAP3K7 activation. This Xenopus laevis (African clawed frog) protein is TNF receptor-associated factor 6-A (traf6-a).